We begin with the raw amino-acid sequence, 199 residues long: GTP cyclohydrolase-2 (199 aa).

Residue 52–56 (RMHSE) coordinates GTP. Zn(2+) contacts are provided by cysteine 57, cysteine 68, and cysteine 70. GTP-binding positions include glutamine 73, 94–96 (EGR), and threonine 116. Aspartate 128 (proton acceptor) is an active-site residue. The Nucleophile role is filled by arginine 130. Positions 151 and 156 each coordinate GTP.

The protein belongs to the GTP cyclohydrolase II family. Zn(2+) serves as cofactor.

The catalysed reaction is GTP + 4 H2O = 2,5-diamino-6-hydroxy-4-(5-phosphoribosylamino)-pyrimidine + formate + 2 phosphate + 3 H(+). It functions in the pathway cofactor biosynthesis; riboflavin biosynthesis; 5-amino-6-(D-ribitylamino)uracil from GTP: step 1/4. Functionally, catalyzes the conversion of GTP to 2,5-diamino-6-ribosylamino-4(3H)-pyrimidinone 5'-phosphate (DARP), formate and pyrophosphate. This chain is GTP cyclohydrolase-2, found in Aliivibrio fischeri (strain MJ11) (Vibrio fischeri).